The primary structure comprises 581 residues: A-type ATP synthase subunit A (581 aa).

Residue 234–241 (GPFGSGKT) coordinates ATP.

The protein belongs to the ATPase alpha/beta chains family. Has multiple subunits with at least A(3), B(3), C, D, E, F, H, I and proteolipid K(x).

The protein resides in the cell membrane. It carries out the reaction ATP + H2O + 4 H(+)(in) = ADP + phosphate + 5 H(+)(out). Its function is as follows. Component of the A-type ATP synthase that produces ATP from ADP in the presence of a proton gradient across the membrane. The A chain is the catalytic subunit. This is A-type ATP synthase subunit A from Archaeoglobus fulgidus (strain ATCC 49558 / DSM 4304 / JCM 9628 / NBRC 100126 / VC-16).